A 562-amino-acid polypeptide reads, in one-letter code: ATP-dependent RNA helicase dbp2 (562 aa).

The Q motif motif lies at 132–160 (ETFDEAGFPRYVMDEVKAQGFPAPTAIQS). A Helicase ATP-binding domain is found at 163–338 (WPMALSGRDV…ADFLTDFIQV (176 aa)). 176-183 (AETGSGKT) serves as a coordination point for ATP. Positions 286 to 289 (DEAD) match the DEAD box motif. One can recognise a Helicase C-terminal domain in the interval 370-515 (HLEKIMEGRE…QIDPRLAEMA (146 aa)). Residues 526-548 (GGYRGRGGGGWRGGRGGGGGGGS) are RNA-binding RGG-box. Residues 536 to 550 (WRGGRGGGGGGGSVG) are compositionally biased toward gly residues. The interval 536–562 (WRGGRGGGGGGGSVGGANALPLNNRRW) is disordered.

The protein belongs to the DEAD box helicase family. DDX5/DBP2 subfamily. As to quaternary structure, associates with polysomes.

The protein localises to the cytoplasm. The protein resides in the nucleus. The enzyme catalyses ATP + H2O = ADP + phosphate + H(+). Its function is as follows. ATP-dependent RNA helicase involved nonsense-mediated mRNA decay and ribosome biogenesis through rRNA processing. In Neurospora crassa (strain ATCC 24698 / 74-OR23-1A / CBS 708.71 / DSM 1257 / FGSC 987), this protein is ATP-dependent RNA helicase dbp2 (drh-1).